We begin with the raw amino-acid sequence, 520 residues long: Solute carrier family 2, facilitated glucose transporter member 14 (520 aa).

At 1-29 the chain is on the cytoplasmic side; the sequence is MEFHNGGHVSGIGGFLVSLTSRMKPHTLA. A helical transmembrane segment spans residues 30–50; it reads VTPALIFAITVATIGSFQFGY. Topologically, residues 51–88 are extracellular; sequence NTGVINAPETIIKEFINKTLTDKANAPPSEVLLTNLWS. The N-linked (GlcNAc...) asparagine glycan is linked to asparagine 67. A helical transmembrane segment spans residues 89–109; that stretch reads LSVAIFSVGGMIGSFSVGLFV. At 110-117 the chain is on the cytoplasmic side; sequence NRFGRRNS. Residues 118–138 traverse the membrane as a helical segment; that stretch reads MLIVNLLAATGGCLMGLCKIA. The Extracellular portion of the chain corresponds to 139 to 148; the sequence is ESVEMLILGR. A helical membrane pass occupies residues 149–169; the sequence is LVIGLFCGLCTGFVPMYIGEI. Residues 170–177 are Cytoplasmic-facing; the sequence is SPTALRGA. Residues 178–198 form a helical membrane-spanning segment; the sequence is FGTLNQLGIVIGILVAQIFGL. Glutamine 183 lines the D-glucose pocket. Over 199–207 the chain is Extracellular; the sequence is ELILGSEEL. The chain crosses the membrane as a helical span at residues 208-228; it reads WPVLLGFTILPAILQSAALPC. Residues 229 to 293 are Cytoplasmic-facing; sequence CPESPRFLLI…LFRVSSYRQP (65 aa). A helical membrane pass occupies residues 294–314; that stretch reads IIISIVLQLSQQLSGINAVFY. D-glucose-binding positions include 304–305 and asparagine 310; that span reads QQ. The Extracellular portion of the chain corresponds to 315-328; sequence YSTGIFKDAGVQQP. Residues 329 to 349 traverse the membrane as a helical segment; the sequence is IYATISAGVVNTIFTLLSLFL. Asparagine 339 contributes to the D-glucose binding site. At 350–358 the chain is on the cytoplasmic side; that stretch reads VERAGRRTL. The helical transmembrane segment at 359–379 threads the bilayer; it reads HMIGLGGMAFCSTLMTVSLLL. Topologically, residues 380–392 are extracellular; the sequence is KNHYNGMSFVCIG. Residues 393–413 traverse the membrane as a helical segment; sequence AILVFVACFEIGPGPIPWFIV. Residues glutamate 402 and tryptophan 410 each contribute to the D-glucose site. The Cytoplasmic segment spans residues 414–423; that stretch reads AELFSQGPRP. The helical transmembrane segment at 424-444 threads the bilayer; the sequence is AAMAVAGCSNWTSNFLVGLLF. At 445–451 the chain is on the extracellular side; sequence PSAAYYL. Residues 452–472 form a helical membrane-spanning segment; it reads GAYVFIIFTGFLITFLAFTFF. The Cytoplasmic portion of the chain corresponds to 473 to 520; the sequence is KVPETRGRTFEDITRAFEGQAHGADRSGKDGVMGMNSIEPAKETTTNV. Residues 493–520 are disordered; sequence AHGADRSGKDGVMGMNSIEPAKETTTNV.

This sequence belongs to the major facilitator superfamily. Sugar transporter (TC 2.A.1.1) family. Glucose transporter subfamily. In terms of tissue distribution, mainly expressed in testis. Also expressed in small intestine, liver and kidney.

It localises to the cell membrane. The enzyme catalyses D-glucose(out) = D-glucose(in). It catalyses the reaction L-dehydroascorbate(out) = L-dehydroascorbate(in). Hexose transporter that can mediate the transport of glucose and dehydroascorbate across the cell membrane. This Homo sapiens (Human) protein is Solute carrier family 2, facilitated glucose transporter member 14.